The sequence spans 578 residues: DNA mismatch repair protein MutL (578 aa).

It belongs to the DNA mismatch repair MutL/HexB family.

In terms of biological role, this protein is involved in the repair of mismatches in DNA. It is required for dam-dependent methyl-directed DNA mismatch repair. May act as a 'molecular matchmaker', a protein that promotes the formation of a stable complex between two or more DNA-binding proteins in an ATP-dependent manner without itself being part of a final effector complex. This chain is DNA mismatch repair protein MutL, found in Carboxydothermus hydrogenoformans (strain ATCC BAA-161 / DSM 6008 / Z-2901).